The primary structure comprises 214 residues: Small ribosomal subunit protein uS3c (214 aa).

Residues 39 to 111 (IRTYLNKLAK…QITINVVEVE (73 aa)) form the KH type-2 domain.

This sequence belongs to the universal ribosomal protein uS3 family. In terms of assembly, part of the 30S ribosomal subunit.

It is found in the plastid. The protein localises to the chloroplast. The sequence is that of Small ribosomal subunit protein uS3c (rps3) from Thalassiosira pseudonana (Marine diatom).